We begin with the raw amino-acid sequence, 382 residues long: Protein NASP homolog 1 (382 aa).

Positions 1–39 (MDTENIADASDIRVKDASGDSDEKGNGTTTEEETVEQKE) are disordered. The segment covering 10-25 (SDIRVKDASGDSDEKG) has biased composition (basic and acidic residues). A TPR 1 repeat occupies 42 to 75 (LAELLAAGRRALKVNDIDKASDSLSEATELSSEI). Positions 103 to 112 (QLLKGPGEKE) are enriched in basic and acidic residues. The tract at residues 103–151 (QLLKGPGEKESGDEEQAGNSDDKTDEENGETEKEDGEESGEEEDDDDDT) is disordered. Acidic residues predominate over residues 125–150 (KTDEENGETEKEDGEESGEEEDDDDD). TPR repeat units follow at residues 191–224 (ADVL…QRNV) and 233–266 (AQTY…LIAR). Residues 264–304 (IARQTELKHELERGVDDKEKKSEFENELKELEEMMPGVEEM) adopt a coiled-coil conformation. The disordered stretch occupies residues 337-382 (PQEAGDQKEANDISSLVRRPAKRAVDAPTDNQAVKKEKEEEGTTSI). Positions 369–382 (AVKKEKEEEGTTSI) are enriched in basic and acidic residues.

The protein belongs to the NASP family. May interact with zinc finger protein tra-4 and histone deacetylase hda-1.

The protein localises to the nucleus. Promotes normal hermaphrodite (XX) development, in concert with zinc finger protein tra-4 and histone deacetylase hda-1, perhaps as components of a complex. May act redundantly with nasp-2. Involved in innate immune response to B.thuringiensis strain DB27 and S.aureus bacteria. May play a role in the uptake or spreading of dsRNA. The chain is Protein NASP homolog 1 from Caenorhabditis elegans.